A 371-amino-acid polypeptide reads, in one-letter code: DNA replication and repair protein RecF (371 aa).

Residue 30 to 37 (GSNGQGKT) participates in ATP binding.

The protein belongs to the RecF family.

The protein resides in the cytoplasm. In terms of biological role, the RecF protein is involved in DNA metabolism; it is required for DNA replication and normal SOS inducibility. RecF binds preferentially to single-stranded, linear DNA. It also seems to bind ATP. The protein is DNA replication and repair protein RecF of Acidothermus cellulolyticus (strain ATCC 43068 / DSM 8971 / 11B).